The following is a 380-amino-acid chain: Guanine nucleotide-binding protein subunit beta (380 aa).

7 WD repeats span residues 64–94 (GHSGKVYSLDWTPEKNWIVSASQDGRLIVWN), 106–136 (LHCPWVMTCAFAPNGQSVACGGLDSACSIFN), 155–186 (GHKGYVSSCQYVPDQETRLITSSGDQTCVLWD), 203–234 (GHTADVLSLSINSSNSNMFVSGSCDATVRLWD), 247–277 (GHEGDINSVKFFPDGQRFGTGSDDGTCRLFD), 296–326 (NELPTVTSIAFSISGRLLFAGYSNGDCYVWD), and 342–372 (SHEGRISCLGLSSDGSALCTGSWDKNLKIWA).

It belongs to the WD repeat G protein beta family. In terms of assembly, g proteins are composed of 3 units, alpha, beta and gamma. Interacts with the gamma subunits RGG1 and RGG2.

It is found in the cell membrane. Guanine nucleotide-binding proteins (G proteins) are involved as modulators or transducers in various transmembrane signaling systems. The beta and gamma chains are required for the GTPase activity, for replacement of GDP by GTP, and for G protein-effector interaction. The chain is Guanine nucleotide-binding protein subunit beta from Oryza sativa subsp. japonica (Rice).